Reading from the N-terminus, the 241-residue chain is 1-(5-phosphoribosyl)-5-[(5-phosphoribosylamino)methylideneamino] imidazole-4-carboxamide isomerase (241 aa).

Asp11 (proton acceptor) is an active-site residue. Asp130 acts as the Proton donor in catalysis.

The protein belongs to the HisA/HisF family.

The protein resides in the cytoplasm. The enzyme catalyses 1-(5-phospho-beta-D-ribosyl)-5-[(5-phospho-beta-D-ribosylamino)methylideneamino]imidazole-4-carboxamide = 5-[(5-phospho-1-deoxy-D-ribulos-1-ylimino)methylamino]-1-(5-phospho-beta-D-ribosyl)imidazole-4-carboxamide. Its pathway is amino-acid biosynthesis; L-histidine biosynthesis; L-histidine from 5-phospho-alpha-D-ribose 1-diphosphate: step 4/9. The sequence is that of 1-(5-phosphoribosyl)-5-[(5-phosphoribosylamino)methylideneamino] imidazole-4-carboxamide isomerase from Acidothermus cellulolyticus (strain ATCC 43068 / DSM 8971 / 11B).